Here is a 224-residue protein sequence, read N- to C-terminus: Serum amyloid P-component (224 aa).

Residues 1-19 (MERLLLWVSVLASLPEAFA) form the signal peptide. The 201-residue stretch at 24–224 (TGKVFVFPRE…YVVIKPRVWS (201 aa)) folds into the Pentraxin (PTX) domain. Asparagine 51 carries an N-linked (GlcNAc...) asparagine glycan. An intrachain disulfide couples cysteine 55 to cysteine 114. Ca(2+)-binding residues include aspartate 77, asparagine 78, glutamate 155, glutamine 156, aspartate 157, and glutamine 167.

This sequence belongs to the pentraxin family. As to quaternary structure, homopentamer. Pentraxin (or pentaxin) have a discoid arrangement of 5 non-covalently bound subunits. It depends on Ca(2+) as a cofactor.

It is found in the secreted. This chain is Serum amyloid P-component (APCS), found in Sus scrofa (Pig).